The following is a 115-amino-acid chain: NADH-ubiquinone oxidoreductase chain 3 (115 aa).

The next 3 membrane-spanning stretches (helical) occupy residues 4–24, 55–75, and 87–107; these read LVALSVNIALSMCLITIAFWL, FFLVAITFLLFDLEIALLLPL, and MMLTSFILVSVLALGLAYEWM.

The protein belongs to the complex I subunit 3 family. As to quaternary structure, core subunit of respiratory chain NADH dehydrogenase (Complex I) which is composed of 45 different subunits. Interacts with TMEM186. Interacts with TMEM242.

Its subcellular location is the mitochondrion inner membrane. It catalyses the reaction a ubiquinone + NADH + 5 H(+)(in) = a ubiquinol + NAD(+) + 4 H(+)(out). Functionally, core subunit of the mitochondrial membrane respiratory chain NADH dehydrogenase (Complex I) which catalyzes electron transfer from NADH through the respiratory chain, using ubiquinone as an electron acceptor. Essential for the catalytic activity of complex I. The chain is NADH-ubiquinone oxidoreductase chain 3 from Habromys lophurus (Crested-tailed deer mouse).